Consider the following 256-residue polypeptide: 5-keto-4-deoxy-D-glucarate aldolase (256 aa).

The active-site Proton acceptor is the H50. Q151 lines the substrate pocket. E153 is a Mg(2+) binding site. S178 and D179 together coordinate substrate. D179 serves as a coordination point for Mg(2+).

Belongs to the HpcH/HpaI aldolase family. KDGluc aldolase subfamily. As to quaternary structure, homohexamer; trimer of dimers. It depends on Mg(2+) as a cofactor.

It catalyses the reaction 5-dehydro-4-deoxy-D-glucarate = 2-hydroxy-3-oxopropanoate + pyruvate. The enzyme catalyses 2-dehydro-3-deoxy-D-glucarate = 2-hydroxy-3-oxopropanoate + pyruvate. It participates in carbohydrate acid metabolism; galactarate degradation; D-glycerate from galactarate: step 2/3. Its function is as follows. Catalyzes the reversible retro-aldol cleavage of both 5-keto-4-deoxy-D-glucarate and 2-keto-3-deoxy-D-glucarate to pyruvate and tartronic semialdehyde. The chain is 5-keto-4-deoxy-D-glucarate aldolase from Escherichia coli (strain ATCC 8739 / DSM 1576 / NBRC 3972 / NCIMB 8545 / WDCM 00012 / Crooks).